Reading from the N-terminus, the 350-residue chain is Geranylgeranyl pyrophosphate synthase (350 aa).

Residues Lys66, Arg69, and His98 each contribute to the isopentenyl diphosphate site. Mg(2+) is bound by residues Asp105 and Asp109. Arg114 lines the dimethylallyl diphosphate pocket. Arg115 lines the isopentenyl diphosphate pocket. Residues Lys200, Thr201, Gln236, Asn243, and Lys263 each contribute to the dimethylallyl diphosphate site.

This sequence belongs to the FPP/GGPP synthase family. The cofactor is Mg(2+).

The enzyme catalyses isopentenyl diphosphate + dimethylallyl diphosphate = (2E)-geranyl diphosphate + diphosphate. It catalyses the reaction isopentenyl diphosphate + (2E)-geranyl diphosphate = (2E,6E)-farnesyl diphosphate + diphosphate. The catalysed reaction is isopentenyl diphosphate + (2E,6E)-farnesyl diphosphate = (2E,6E,10E)-geranylgeranyl diphosphate + diphosphate. The protein operates within secondary metabolite biosynthesis; terpenoid biosynthesis. Its function is as follows. Geranylgeranyl pyrophosphate synthase; part of the gene cluster that mediates the biosynthesis of pleuromutilin, a tricyclic diterpene showing antibacterial properties. The geranylgeranyl diphosphate (GGPP) synthase ple4 catalyzes the first step in pleuromutilin biosynthesis. GGPP is then substrate of the premutilin synthase (PS) ple3 to yield premutilin. Premutilin synthase is a bifunctional enzyme composed of the fusion of a class II diterpene cyclase (DTC) and a class I diterpene synthase (DTS), with the corresponding domains and active sites containing characteristic aspartate-rich motifs. GGPP is first converted to mutildienyl-diphosphate (MPP) at the class II DTC site. MPP is subsequently further cyclized at the class I DTS site, followed by a 1,5-hydride shift and addition of water prior to terminating deprotonation, to yield premutilin. The cytochrome P450 monooxygenases ple5 and ple6 hydroxylate premutilin at C-11 and C-3, respectively, producing 11-hydroxypremutilin and 3-hydroxypremutilin. The combination of the actions of both ple5 and ple6 leads to the production of 3,11-dihydroxypremutilin. The short chain dehydrogenase ple7 further converts 3,11-dihydroxypremutilin into mutilin. The acetyltransferase ple2 then acetylates mutilin to produce 14-O-acetylmutilin. Finally, the cytochrome P450 monooxygenase ple1 catalyzes hydroxylation on the alpha position of the acetyl side chain of 14-O-acetylmutilin to yield pleuromutilin. The sequence is that of Geranylgeranyl pyrophosphate synthase from Rhodocybe pseudopiperita (Clitopilus pseudopiperitus).